Here is a 254-residue protein sequence, read N- to C-terminus: GTP cyclohydrolase 1 type 2 homolog (254 aa).

Residues H68, H69, D106, H222, and E226 each contribute to the a divalent metal cation site.

The protein belongs to the GTP cyclohydrolase I type 2/NIF3 family. In terms of assembly, homohexamer.

This chain is GTP cyclohydrolase 1 type 2 homolog, found in Allochromatium vinosum (strain ATCC 17899 / DSM 180 / NBRC 103801 / NCIMB 10441 / D) (Chromatium vinosum).